Reading from the N-terminus, the 397-residue chain is Xylose isomerase (397 aa).

Active-site residues include H54 and D57. Positions 181, 217, 220, 245, 255, 257, and 293 each coordinate Mg(2+).

It belongs to the xylose isomerase family. In terms of assembly, homotetramer. Mg(2+) serves as cofactor.

The protein resides in the cytoplasm. It carries out the reaction alpha-D-xylose = alpha-D-xylulofuranose. This is Xylose isomerase from Clavibacter michiganensis subsp. michiganensis (strain NCPPB 382).